The following is a 502-amino-acid chain: 4,4'-diapophytoene desaturase (4,4'-diaponeurosporene-forming) (502 aa).

FAD is bound at residue Val5–Ala17.

Belongs to the carotenoid/retinoid oxidoreductase family. CrtN subfamily.

It carries out the reaction 15-cis-4,4'-diapophytoene + 3 FAD + 3 H(+) = all-trans-4,4'-diaponeurosporene + 3 FADH2. It functions in the pathway carotenoid biosynthesis; staphyloxanthin biosynthesis; staphyloxanthin from farnesyl diphosphate: step 2/5. In terms of biological role, involved in the biosynthesis of the yellow-orange carotenoid staphyloxanthin, which plays a role in the virulence via its protective function against oxidative stress. Catalyzes three successive dehydrogenation reactions that lead to the introduction of three double bonds into 4,4'-diapophytoene (dehydrosqualene), with 4,4'-diapophytofluene and 4,4'-diapo-zeta-carotene as intermediates, and 4,4'-diaponeurosporene (the major deep-yellow pigment in staphylococci strains) as the end product. The protein is 4,4'-diapophytoene desaturase (4,4'-diaponeurosporene-forming) of Staphylococcus aureus (strain bovine RF122 / ET3-1).